Consider the following 545-residue polypeptide: Lysine--tRNA ligase (545 aa).

Residues 33-41 carry the 'HIGH' region motif; that stretch reads VSGLQHIGR. Residues 288–292 carry the 'KMSKS' region motif; it reads DMSSS.

The protein belongs to the class-I aminoacyl-tRNA synthetase family.

The protein resides in the cytoplasm. It catalyses the reaction tRNA(Lys) + L-lysine + ATP = L-lysyl-tRNA(Lys) + AMP + diphosphate. This is Lysine--tRNA ligase (lysS) from Aeropyrum pernix (strain ATCC 700893 / DSM 11879 / JCM 9820 / NBRC 100138 / K1).